The primary structure comprises 620 residues: MGKVIGIDLGTTNSAMAVYEGNEAKIIANKEGKNTTPSIVAFTDKGEILVGESAKRQAVTNPEKTIYSIKRIMGLMFNEEKAKEAEKRLPYKIVDRNGACAIEISGKVYTPQEISAKILMKLKEDAESYLGESVTEAVITVPAYFNDSQRKATKEAGTIAGLNVLRIINEPTSAALAYGLDKKESEKIMVYDLGGGTFDVTVLETGDNVVEVLATGGDAFLGGDDFDNRVIDFLATEFKNETGIEIKNDVMALQRLKEAAENAKKELSSAMETEINLPFITADATGPKHLVKKLTRAKFESLTEDLIEETISKIEGVIKDAGLTKNEISEVVMVGGSTRIPKVQERVKGFINKELNKSVNPDEVVAVGASIQGGVLKGDVKDVLLLDVTPLSLGIETLGGVMTKVIDRGTTIPAKKSQVFSTAEDNQPAVSIMVLQGERDLARDNKSLGKFDLQGIAPAPRGVPQIEVTFDIDANGILTVSAQDKNTGKSQEIKISGSSGLSDSEIEKMVKDAELHKEEDARKKEVIEARNHADSLAHQTQKSLDEHKANLNENDANEIQNAINALKDCIKNDNATKAELEDKTKALVQAAQKLGEAMANKNNAEQPKKKDDDVIDAEVE.

T197 carries the post-translational modification Phosphothreonine; by autocatalysis. A disordered region spans residues 597–620; sequence AMANKNNAEQPKKKDDDVIDAEVE.

The protein belongs to the heat shock protein 70 family.

Its function is as follows. Acts as a chaperone. This is Chaperone protein DnaK from Helicobacter acinonychis (strain Sheeba).